We begin with the raw amino-acid sequence, 93 residues long: Phosphoribosyl-ATP pyrophosphatase (93 aa).

The protein belongs to the PRA-PH family.

The protein resides in the cytoplasm. The enzyme catalyses 1-(5-phospho-beta-D-ribosyl)-ATP + H2O = 1-(5-phospho-beta-D-ribosyl)-5'-AMP + diphosphate + H(+). Its pathway is amino-acid biosynthesis; L-histidine biosynthesis; L-histidine from 5-phospho-alpha-D-ribose 1-diphosphate: step 2/9. This Corynebacterium aurimucosum (strain ATCC 700975 / DSM 44827 / CIP 107346 / CN-1) (Corynebacterium nigricans) protein is Phosphoribosyl-ATP pyrophosphatase.